The primary structure comprises 620 residues: EF-hand calcium-binding domain-containing protein 7 (620 aa).

Residues 1–24 are disordered; the sequence is MANHSSLPSQKYAASERQEYQKPQ. EF-hand domains follow at residues 98–133 and 134–169; these read ATKN…KGEK and MSQE…TCEQ. The tract at residues 176–234 is disordered; that stretch reads ERMDSNSKAKRQQFGSYIEKSPERSSSPKSSHGNLKLFDSETSTRKENKSSRPSSARSY. A compositionally biased stretch (basic and acidic residues) spans 213 to 225; sequence FDSETSTRKENKS. The region spanning 394–429 is the EF-hand 3 domain; sequence EFKSALSDMFDIIDLDGNGLLSLAEYNFFEMRTSGE. Aspartate 407, aspartate 409, asparagine 411, and glutamate 418 together coordinate Ca(2+).

It localises to the cell projection. Its subcellular location is the cilium membrane. Plays a role in the ciliary Hedgehog (Hh) signaling. The polypeptide is EF-hand calcium-binding domain-containing protein 7 (efcab7) (Xenopus laevis (African clawed frog)).